The following is a 108-amino-acid chain: Nucleoid-associated protein mma_2329 (108 aa).

The protein belongs to the YbaB/EbfC family. As to quaternary structure, homodimer.

It localises to the cytoplasm. Its subcellular location is the nucleoid. Its function is as follows. Binds to DNA and alters its conformation. May be involved in regulation of gene expression, nucleoid organization and DNA protection. This is Nucleoid-associated protein mma_2329 from Janthinobacterium sp. (strain Marseille) (Minibacterium massiliensis).